Here is a 149-residue protein sequence, read N- to C-terminus: Arginine regulator (149 aa).

It belongs to the ArgR family.

It is found in the cytoplasm. It participates in amino-acid degradation; L-arginine degradation via ADI pathway. In terms of biological role, regulates the transcription of the arc operon, involved in arginine catabolism. The chain is Arginine regulator (argR1) from Bacillus thuringiensis subsp. konkukian (strain 97-27).